The following is a 178-amino-acid chain: ATP-dependent protease subunit HslV (178 aa).

T8 is a catalytic residue. The Na(+) site is built by G163, C166, and T169.

The protein belongs to the peptidase T1B family. HslV subfamily. As to quaternary structure, a double ring-shaped homohexamer of HslV is capped on each side by a ring-shaped HslU homohexamer. The assembly of the HslU/HslV complex is dependent on binding of ATP.

It localises to the cytoplasm. The enzyme catalyses ATP-dependent cleavage of peptide bonds with broad specificity.. Allosterically activated by HslU binding. Its function is as follows. Protease subunit of a proteasome-like degradation complex believed to be a general protein degrading machinery. This Treponema denticola (strain ATCC 35405 / DSM 14222 / CIP 103919 / JCM 8153 / KCTC 15104) protein is ATP-dependent protease subunit HslV.